A 31-amino-acid chain; its full sequence is Photosystem II reaction center protein T (31 aa).

The chain crosses the membrane as a helical span at residues 3 to 23; that stretch reads ALVYTFLLVGTLGIIFFSIFF.

Belongs to the PsbT family. In terms of assembly, PSII is composed of 1 copy each of membrane proteins PsbA, PsbB, PsbC, PsbD, PsbE, PsbF, PsbH, PsbI, PsbJ, PsbK, PsbL, PsbM, PsbT, PsbY, PsbZ, Psb30/Ycf12, at least 3 peripheral proteins of the oxygen-evolving complex and a large number of cofactors. It forms dimeric complexes.

It is found in the plastid. It localises to the chloroplast thylakoid membrane. Its function is as follows. Found at the monomer-monomer interface of the photosystem II (PS II) dimer, plays a role in assembly and dimerization of PSII. PSII is a light-driven water plastoquinone oxidoreductase, using light energy to abstract electrons from H(2)O, generating a proton gradient subsequently used for ATP formation. In Tupiella akineta (Green alga), this protein is Photosystem II reaction center protein T.